Here is a 294-residue protein sequence, read N- to C-terminus: MAAITAAMVGELRAKTDAPMMECKKALTEADGDMARAEEILRVKLGSKAGKAASRVTAEGIVATAINGSTGALLEVNCETDFVSKNDDFLAFVNDCVKLVAEKNPADVAALLALPLNGQTVDEVRSALIGKIGENIMPRRFKRFTGSNKLVSYLHGTRIGVMVEFEGDDTAAKDVAMHIAAMKPVALSMADVPAESIAIERSVAVQKAAESGKPPEIVEKMVEGSIQKYLKEVSLLNQTFVKNDKQTVEQMLKAANTTIKGFTMYVVGEGIEKRQDDFAAEVAAQVAAASKATA.

An involved in Mg(2+) ion dislocation from EF-Tu region spans residues 80–83 (TDFV).

This sequence belongs to the EF-Ts family.

It localises to the cytoplasm. In terms of biological role, associates with the EF-Tu.GDP complex and induces the exchange of GDP to GTP. It remains bound to the aminoacyl-tRNA.EF-Tu.GTP complex up to the GTP hydrolysis stage on the ribosome. This chain is Elongation factor Ts, found in Polynucleobacter asymbioticus (strain DSM 18221 / CIP 109841 / QLW-P1DMWA-1) (Polynucleobacter necessarius subsp. asymbioticus).